Consider the following 107-residue polypeptide: Probable 4-amino-4-deoxy-L-arabinose-phosphoundecaprenol flippase subunit ArnE (107 aa).

The EamA domain maps to 31–105 (RVWGWLALSL…IIVGIILLGG (75 aa)). Transmembrane regions (helical) follow at residues 34–54 (GWLA…LFVL), 57–77 (VPVS…TLAA), and 85–105 (IALR…LLGG).

Belongs to the ArnE family. Heterodimer of ArnE and ArnF.

It is found in the cell inner membrane. Its pathway is bacterial outer membrane biogenesis; lipopolysaccharide biosynthesis. In terms of biological role, translocates 4-amino-4-deoxy-L-arabinose-phosphoundecaprenol (alpha-L-Ara4N-phosphoundecaprenol) from the cytoplasmic to the periplasmic side of the inner membrane. The polypeptide is Probable 4-amino-4-deoxy-L-arabinose-phosphoundecaprenol flippase subunit ArnE (Enterobacter sp. (strain 638)).